The following is a 224-amino-acid chain: Dehydration-responsive element-binding protein 1G (224 aa).

The span at Met-1–Pro-16 shows a compositional bias: polar residues. The disordered stretch occupies residues Met-1–Lys-46. Residues Val-54–Ala-111 constitute a DNA-binding region (AP2/ERF). Disordered stretches follow at residues Ala-139–Thr-161 and Pro-200–Tyr-224.

This sequence belongs to the AP2/ERF transcription factor family. ERF subfamily.

It localises to the nucleus. Its function is as follows. Transcriptional activator that binds specifically to the DNA sequence 5'-[AG]CCGAC-3'. Binding to the C-repeat/DRE element mediates high salinity- and dehydration-inducible transcription. In Oryza sativa subsp. japonica (Rice), this protein is Dehydration-responsive element-binding protein 1G (DREB1G).